The sequence spans 413 residues: Multifunctional CCA protein (413 aa).

ATP-binding residues include Gly8 and Arg11. The CTP site is built by Gly8 and Arg11. 2 residues coordinate Mg(2+): Asp21 and Asp23. The ATP site is built by Arg91, Arg137, and Arg140. Positions 91, 137, and 140 each coordinate CTP. The 102-residue stretch at Thr228–Trp329 folds into the HD domain.

Belongs to the tRNA nucleotidyltransferase/poly(A) polymerase family. Bacterial CCA-adding enzyme type 1 subfamily. In terms of assembly, monomer. Can also form homodimers and oligomers. Mg(2+) is required as a cofactor. The cofactor is Ni(2+).

The enzyme catalyses a tRNA precursor + 2 CTP + ATP = a tRNA with a 3' CCA end + 3 diphosphate. It carries out the reaction a tRNA with a 3' CCA end + 2 CTP + ATP = a tRNA with a 3' CCACCA end + 3 diphosphate. Functionally, catalyzes the addition and repair of the essential 3'-terminal CCA sequence in tRNAs without using a nucleic acid template. Adds these three nucleotides in the order of C, C, and A to the tRNA nucleotide-73, using CTP and ATP as substrates and producing inorganic pyrophosphate. tRNA 3'-terminal CCA addition is required both for tRNA processing and repair. Also involved in tRNA surveillance by mediating tandem CCA addition to generate a CCACCA at the 3' terminus of unstable tRNAs. While stable tRNAs receive only 3'-terminal CCA, unstable tRNAs are marked with CCACCA and rapidly degraded. The protein is Multifunctional CCA protein of Shewanella denitrificans (strain OS217 / ATCC BAA-1090 / DSM 15013).